The chain runs to 671 residues: DNA ligase (671 aa).

NAD(+) is bound by residues 32-36 (DAEYD), 81-82 (SL), and Glu113. Lys115 acts as the N6-AMP-lysine intermediate in catalysis. Arg136, Glu173, Lys290, and Lys314 together coordinate NAD(+). The Zn(2+) site is built by Cys408, Cys411, Cys426, and Cys432. In terms of domain architecture, BRCT spans 593–671 (EIDSPFAGKT…EAEMLRLLGS (79 aa)).

This sequence belongs to the NAD-dependent DNA ligase family. LigA subfamily. The cofactor is Mg(2+). Mn(2+) serves as cofactor.

It catalyses the reaction NAD(+) + (deoxyribonucleotide)n-3'-hydroxyl + 5'-phospho-(deoxyribonucleotide)m = (deoxyribonucleotide)n+m + AMP + beta-nicotinamide D-nucleotide.. DNA ligase that catalyzes the formation of phosphodiester linkages between 5'-phosphoryl and 3'-hydroxyl groups in double-stranded DNA using NAD as a coenzyme and as the energy source for the reaction. It is essential for DNA replication and repair of damaged DNA. The sequence is that of DNA ligase from Shigella boydii serotype 4 (strain Sb227).